A 111-amino-acid chain; its full sequence is UPF0125 protein SO_1475 (111 aa).

Residues 88–111 (VRRRRADKAKDEGRANKVTGGRVS) form a disordered region.

This sequence belongs to the UPF0125 (RnfH) family.

This chain is UPF0125 protein SO_1475, found in Shewanella oneidensis (strain ATCC 700550 / JCM 31522 / CIP 106686 / LMG 19005 / NCIMB 14063 / MR-1).